The primary structure comprises 419 residues: Synaptotagmin-1 (419 aa).

The Vesicular portion of the chain corresponds to 1–57 (MVSESHHEALAAPPVTTVATVLPSNATEPASPGEGKEDAFSKLKEKFMNELHKIPLP). An N-linked (GlcNAc...) asparagine glycan is attached at N25. The helical transmembrane segment at 58–80 (PWALIAIAIVAVLLVLTCCFCIC) threads the bilayer. Residues C75, C76, C78, C80, and C83 are each lipidated (S-palmitoyl cysteine). Topologically, residues 81–419 (KKCLFKKKNK…EVDAMLAVKK (339 aa)) are cytoplasmic. The tract at residues 108–139 (KDLGKTMKDQDDDAETGLTDGEEKEEPKEEEK) is disordered. The span at 117–131 (QDDDAETGLTDGEEK) shows a compositional bias: acidic residues. Position 126 is a phosphothreonine (T126). Residues 133–379 (EPKEEEKLGK…AIGKVFVGYN (247 aa)) are phospholipid binding. Residues 139–258 (KLGKLQYSLD…DFGHVTEEWR (120 aa)) form the C2 1 domain. Residues L169, D170, and D176 each coordinate Ca(2+). The residue at position 227 (Y227) is a Phosphotyrosine. 6 residues coordinate Ca(2+): D228, F229, D230, S233, K234, and D236. S262 carries the post-translational modification Phosphoserine. The C2 2 domain occupies 270–403 (KLGDICFSLR…NPRRPIAQWH (134 aa)). Ca(2+)-binding residues include D301 and D307. A phosphoserine mark is found at S340 and S342. Positions 361, 363, and 369 each coordinate Ca(2+).

The protein belongs to the synaptotagmin family. As to quaternary structure, homotetramer. Heterodimer; heterodimerizes with SYT2 in presence of calcium. Interacts with SCAMP5. Interacts with STON2. Forms a complex with SV2B, syntaxin 1 and SNAP25. Interacts with SV2A, SV2B and SV2C. Interacts with RIMS1. Interacts with PRRT2. Interacts with DNAJC5 in a phosphorylation-dependent manner. Interacts (via N-terminus) with RAB3A. Interacts with SYT12. Interacts with calmodulin. Interacts with DNM1 (via C-terminal proline-rich domain (PRD)); this interaction facilitates vesicle fission during clathrin-mediated endocytosis (CME). The cofactor is Ca(2+). In terms of processing, glycosylated.

Its subcellular location is the cytoplasmic vesicle. The protein resides in the secretory vesicle membrane. The protein localises to the secretory vesicle. It localises to the synaptic vesicle membrane. It is found in the chromaffin granule membrane. Its subcellular location is the cytoplasm. Calcium sensor that participates in triggering neurotransmitter release at the synapse. May have a regulatory role in the membrane interactions during trafficking of synaptic vesicles at the active zone of the synapse. It binds acidic phospholipids with a specificity that requires the presence of both an acidic head group and a diacyl backbone. A Ca(2+)-dependent interaction between synaptotagmin and putative receptors for activated protein kinase C has also been reported. It can bind to at least three additional proteins in a Ca(2+)-independent manner; these are neurexins, syntaxin and AP2. Plays a role in dendrite formation by melanocytes. This is Synaptotagmin-1 from Macaca fascicularis (Crab-eating macaque).